A 144-amino-acid chain; its full sequence is UPF0225 protein RSc0270 (144 aa).

Belongs to the UPF0225 family.

This chain is UPF0225 protein RSc0270, found in Ralstonia nicotianae (strain ATCC BAA-1114 / GMI1000) (Ralstonia solanacearum).